Consider the following 249-residue polypeptide: Type III pantothenate kinase (249 aa).

Position 6 to 13 (6 to 13) interacts with ATP; sequence DCGNSFIK. Substrate-binding positions include tyrosine 93 and 100 to 103; that span reads GLDR. Catalysis depends on aspartate 102, which acts as the Proton acceptor. A K(+)-binding site is contributed by aspartate 122. Threonine 125 provides a ligand contact to ATP. Threonine 181 is a binding site for substrate.

The protein belongs to the type III pantothenate kinase family. Homodimer. The cofactor is NH4(+). Requires K(+) as cofactor.

It localises to the cytoplasm. The enzyme catalyses (R)-pantothenate + ATP = (R)-4'-phosphopantothenate + ADP + H(+). It functions in the pathway cofactor biosynthesis; coenzyme A biosynthesis; CoA from (R)-pantothenate: step 1/5. In terms of biological role, catalyzes the phosphorylation of pantothenate (Pan), the first step in CoA biosynthesis. The polypeptide is Type III pantothenate kinase (Pseudomonas fluorescens (strain SBW25)).